The primary structure comprises 268 residues: Hydroxyethylthiazole kinase 2 (268 aa).

Met-42 is a binding site for substrate. ATP-binding residues include Lys-117 and Thr-167. Gly-194 contributes to the substrate binding site.

Belongs to the Thz kinase family. Mg(2+) is required as a cofactor.

The catalysed reaction is 5-(2-hydroxyethyl)-4-methylthiazole + ATP = 4-methyl-5-(2-phosphooxyethyl)-thiazole + ADP + H(+). The protein operates within cofactor biosynthesis; thiamine diphosphate biosynthesis; 4-methyl-5-(2-phosphoethyl)-thiazole from 5-(2-hydroxyethyl)-4-methylthiazole: step 1/1. In terms of biological role, catalyzes the phosphorylation of the hydroxyl group of 4-methyl-5-beta-hydroxyethylthiazole (THZ). The protein is Hydroxyethylthiazole kinase 2 of Streptococcus pneumoniae (strain CGSP14).